The following is a 109-amino-acid chain: Cell division protein ZapA (109 aa).

The stretch at 21 to 97 forms a coiled coil; it reads PEQQEALNQA…QTIEQALVEQ (77 aa).

The protein belongs to the ZapA family. Type 1 subfamily. Homodimer. Interacts with FtsZ.

The protein localises to the cytoplasm. Functionally, activator of cell division through the inhibition of FtsZ GTPase activity, therefore promoting FtsZ assembly into bundles of protofilaments necessary for the formation of the division Z ring. It is recruited early at mid-cell but it is not essential for cell division. The sequence is that of Cell division protein ZapA from Sodalis glossinidius (strain morsitans).